Here is an 89-residue protein sequence, read N- to C-terminus: MARVTVEDAVDRVGNRFDLILLASRRARQLANGKEPLVETKNEKPTVIALREIEQGLIDNERLDIEDQAAQKQQDAEELRAVDALRGIE.

The protein belongs to the RNA polymerase subunit omega family. The RNAP catalytic core consists of 2 alpha, 1 beta, 1 beta' and 1 omega subunit. When a sigma factor is associated with the core the holoenzyme is formed, which can initiate transcription.

The catalysed reaction is RNA(n) + a ribonucleoside 5'-triphosphate = RNA(n+1) + diphosphate. Its function is as follows. Promotes RNA polymerase assembly. Latches the N- and C-terminal regions of the beta' subunit thereby facilitating its interaction with the beta and alpha subunits. In Idiomarina loihiensis (strain ATCC BAA-735 / DSM 15497 / L2-TR), this protein is DNA-directed RNA polymerase subunit omega.